Here is a 412-residue protein sequence, read N- to C-terminus: tRNA (guanine-N(7)-)-methyltransferase non-catalytic subunit WDR4 (412 aa).

Alanine 2 carries the post-translational modification N-acetylalanine. WD repeat units lie at residues 3–40 (GSVGLALCGQTLVVRGGSRFLATSIASSDDDSLFIYDC), 50–90 (NKGE…LFRT), 94–131 (QCLSVRTVARRCTALTFIASEEKVLVADKSGDVYSFSV), 137–174 (CGRLELGHLSMLLDVAVSPDDRFILTADRDEKIRVSWA), 180–218 (IESFCLGHTEFVSRISVVPTQPGLLLSSSGDGTLRLWEY), 230–273 (ASLQ…IFQL), and 319–373 (PVGD…SYLK). The interval 377 to 412 (ERLQQQLEKKQRRRSPPPGPDGHAKKMRPGEATLSC) is disordered. Serine 391 and serine 411 each carry phosphoserine.

Belongs to the WD repeat TRM82 family. In terms of assembly, non-catalytic component of the METTL1-WDR4 complex, composed of METTL1 and WDR4. Interacts with FEN1; the interaction is direct.

It localises to the nucleus. Its subcellular location is the chromosome. The protein operates within tRNA modification; N(7)-methylguanine-tRNA biosynthesis. Its function is as follows. Non-catalytic component of the METTL1-WDR4 methyltransferase complex required for the formation of N(7)-methylguanine in a subset of RNA species, such as tRNAs, mRNAs and microRNAs (miRNAs). In the METTL1-WDR4 methyltransferase complex, WDR4 acts as a scaffold for tRNA-binding. Required for the formation of N(7)-methylguanine at position 46 (m7G46) in a large subset of tRNAs that contain the 5'-RAGGU-3' motif within the variable loop. M7G46 interacts with C13-G22 in the D-loop to stabilize tRNA tertiary structure and protect tRNAs from decay. Also required for the formation of N(7)-methylguanine at internal sites in a subset of mRNAs. Also required for methylation of a specific subset of miRNAs, such as let-7. Independently of METTL1, also plays a role in genome stability: localizes at the DNA replication site and regulates endonucleolytic activities of FEN1. The sequence is that of tRNA (guanine-N(7)-)-methyltransferase non-catalytic subunit WDR4 from Homo sapiens (Human).